The following is a 108-amino-acid chain: Integration host factor subunit alpha (108 aa).

Belongs to the bacterial histone-like protein family. As to quaternary structure, heterodimer of an alpha and a beta chain.

Functionally, this protein is one of the two subunits of integration host factor, a specific DNA-binding protein that functions in genetic recombination as well as in transcriptional and translational control. This is Integration host factor subunit alpha from Methylorubrum populi (strain ATCC BAA-705 / NCIMB 13946 / BJ001) (Methylobacterium populi).